Consider the following 735-residue polypeptide: Receptor-type guanylate cyclase gcy-27 (735 aa).

N-linked (GlcNAc...) asparagine glycosylation occurs at Asn11. The helical transmembrane segment at 28–48 (FIICTLPVPIYFVVVAIWTIN) threads the bilayer. Residues 188-465 (ALTSRRRVFG…IENLRNAIAI (278 aa)) enclose the Protein kinase domain. The region spanning 538-668 (TVMFVQICDF…DTVNFASRMQ (131 aa)) is the Guanylate cyclase domain.

Belongs to the adenylyl cyclase class-4/guanylyl cyclase family. Expressed bilaterally in ASK, ASI and ASJ sensory neurons.

It is found in the cell membrane. It catalyses the reaction GTP = 3',5'-cyclic GMP + diphosphate. In terms of biological role, guanylate cyclase involved in the production of the second messenger cGMP. May be involved in sensitivity to quinine by regulating egl-4 activity through the production of cGMP. Promotes the calcium flux to the cytoplasm in ASJ sensory neurons upon removal of a nitric oxide (NO) stimulus and is thereby involved in the behavioral avoidance response to NO-producing organisms like P.aeruginosa. In Caenorhabditis elegans, this protein is Receptor-type guanylate cyclase gcy-27.